A 277-amino-acid polypeptide reads, in one-letter code: 4-hydroxy-tetrahydrodipicolinate reductase (277 aa).

9 to 14 (GATGRM) is an NAD(+) binding site. Lys37 provides a ligand contact to NADP(+). An NAD(+)-binding site is contributed by 75–77 (GTS). His132 functions as the Proton donor/acceptor in the catalytic mechanism. The Proton donor role is filled by Lys136. (S)-2,3,4,5-tetrahydrodipicolinate is bound at residue 142–143 (GT). Residues 245 to 277 (SRERATQTAPTGAASGPVDDGGPSGQAATVTSA) are disordered.

Belongs to the DapB family.

The protein resides in the cytoplasm. It carries out the reaction (S)-2,3,4,5-tetrahydrodipicolinate + NAD(+) + H2O = (2S,4S)-4-hydroxy-2,3,4,5-tetrahydrodipicolinate + NADH + H(+). The catalysed reaction is (S)-2,3,4,5-tetrahydrodipicolinate + NADP(+) + H2O = (2S,4S)-4-hydroxy-2,3,4,5-tetrahydrodipicolinate + NADPH + H(+). It functions in the pathway amino-acid biosynthesis; L-lysine biosynthesis via DAP pathway; (S)-tetrahydrodipicolinate from L-aspartate: step 4/4. In terms of biological role, catalyzes the conversion of 4-hydroxy-tetrahydrodipicolinate (HTPA) to tetrahydrodipicolinate. In Clavibacter sepedonicus (Clavibacter michiganensis subsp. sepedonicus), this protein is 4-hydroxy-tetrahydrodipicolinate reductase.